The sequence spans 632 residues: Probable potassium transport system protein Kup 1 (632 aa).

A run of 12 helical transmembrane segments spans residues Leu19–Leu39, Val59–Val79, Val110–Pro130, Pro146–Ile166, Phe178–Val198, Ile213–Val233, Trp256–Leu276, Met298–Phe318, Ile346–Phe366, Ala373–Val393, Pro403–Ala423, and Val428–Thr448.

The protein belongs to the HAK/KUP transporter (TC 2.A.72) family.

Its subcellular location is the cell inner membrane. It catalyses the reaction K(+)(in) + H(+)(in) = K(+)(out) + H(+)(out). Transport of potassium into the cell. Likely operates as a K(+):H(+) symporter. The polypeptide is Probable potassium transport system protein Kup 1 (Cupriavidus necator (strain ATCC 17699 / DSM 428 / KCTC 22496 / NCIMB 10442 / H16 / Stanier 337) (Ralstonia eutropha)).